A 393-amino-acid chain; its full sequence is NAD(P)H-quinone oxidoreductase subunit H, chloroplastic (393 aa).

The protein belongs to the complex I 49 kDa subunit family. NDH is composed of at least 16 different subunits, 5 of which are encoded in the nucleus.

Its subcellular location is the plastid. The protein resides in the chloroplast thylakoid membrane. It catalyses the reaction a plastoquinone + NADH + (n+1) H(+)(in) = a plastoquinol + NAD(+) + n H(+)(out). It carries out the reaction a plastoquinone + NADPH + (n+1) H(+)(in) = a plastoquinol + NADP(+) + n H(+)(out). NDH shuttles electrons from NAD(P)H:plastoquinone, via FMN and iron-sulfur (Fe-S) centers, to quinones in the photosynthetic chain and possibly in a chloroplast respiratory chain. The immediate electron acceptor for the enzyme in this species is believed to be plastoquinone. Couples the redox reaction to proton translocation, and thus conserves the redox energy in a proton gradient. The sequence is that of NAD(P)H-quinone oxidoreductase subunit H, chloroplastic from Huperzia lucidula (Shining clubmoss).